The primary structure comprises 336 residues: NmrA-like family domain-containing oxidoreductase malD (336 aa).

Residues 12–17, 40–44, 61–62, 82–84, K140, and 163–166 each bind NADP(+); these read GGTGNQ, RDPTS, DG, TNS, and FMEA.

Belongs to the NmrA-type oxidoreductase family.

NmrA-like family domain-containing oxidoreductase; part of the gene cluster that mediates the biosynthesis of malbrancheamide, a dichlorinated fungal indole alkaloid that belongs to a family of natural products containing a characteristic bicyclo[2.2.2]diazaoctane core. The first step of malbrancheamide biosynthesis involves coupling of L-proline and L-tryptophan by malG, a bimodular NRPS, to produce L-Pro-L-Trp aldehyde through reductive offloading. This compound undergoes spontaneous cyclization and dehydration to give a dienamine which is reverse prenylated at C-2 by malE. The other prenyltransferase present in the cluster, malB, displays modest activity, suggesting that may be a redundant gene in the pathway. Subsequently, a [4+2] Diels-Alder cyclo-addition catalyzed by the bifunctional enzyme malC forms the characteristic bicyclo[2.2.2]diazaoctane ring of premalbrancheamid. Finally, the flavin-dependent halogenase malA catalyzes the iterative dichlorination of the indole ring of premalbrancheamide to yield C-9 monochlorinated malbrancheamide B, C-8 monochlorinated isomalbrancheamide B, and dichlorinated malbrancheamide. MalA is also able to brominate premalbrancheamide at C-9 to yield malbrancheamide C, and, to a lesser extend, at C-8 to yield isomalbrancheamide C. Finally, malA can brominate C-9 monochlorinated malbrancheamide B at C-8 to yield malbrancheamide D, or C-8 monochlorinated isomalbrancheamide B at C-9 to produce isomalbrancheamide D. The polypeptide is NmrA-like family domain-containing oxidoreductase malD (Malbranchea aurantiaca).